The following is a 364-amino-acid chain: Transcription factor SPEECHLESS (364 aa).

Residues 35 to 109 (GEISPTAAST…QKMSHVTVER (75 aa)) form a disordered region. Position 38 is a phosphoserine; by ASK7 (S38). The residue at position 40 (T40) is a Phosphothreonine; by ASK7. The segment covering 40-53 (TAASTPKDGTTSSK) has biased composition (polar residues). Phosphoserine; by ASK7 is present on S43. T44 is subject to Phosphothreonine; by ASK7. A Phosphoserine; by ASK7 modification is found at S65. Residues 79 to 92 (EDEEEEDGDGEAEE) show a composition bias toward acidic residues. Residues 99–112 (QQKMSHVTVERNRR) form a basic motif region. In terms of domain architecture, bHLH spans 99–150 (QQKMSHVTVERNRRKQMNEHLTVLRSLMPCFYVKRGDQASIIGGVVEYISEL). A helix-loop-helix motif region spans residues 113–150 (KQMNEHLTVLRSLMPCFYVKRGDQASIIGGVVEYISEL). S171 bears the Phosphoserine; by ASK7 mark. The disordered stretch occupies residues 171-227 (SPRVVPSPRPSPPVLSPRKPPLSPRINHHQIHHHLLLPPISPRTPQPTSPYRAIPPQ). The span at 175–193 (VPSPRPSPPVLSPRKPPLS) shows a compositional bias: pro residues. S177 bears the Phosphoserine; by ASK7, MPK3 and MPK6 mark. Residue S181 is modified to Phosphoserine; by ASK7. Residue S186 is modified to Phosphoserine; by CDKA-1, ASK7, MPK3 and MPK6. S193 is subject to Phosphoserine; by MPK3 and MPK6. Over residues 196–205 (INHHQIHHHL) the composition is skewed to basic residues. Over residues 209–218 (PISPRTPQPT) the composition is skewed to pro residues. Position 211 is a phosphoserine; by MPK3 and MPK6 (S211). A Phosphothreonine; by ASK7, MPK3 and MPK6 modification is found at T214. At S219 the chain carries Phosphoserine; by ASK7, MPK3 and MPK6.

In terms of assembly, homodimer. Forms dimers with SCRM and SCRM2. May interact with CDKA-1. Post-translationally, phosphorylated by ASK7/BIN2 and ASK3/SK12; this post-translational modification inhibits activity and limit epidermal cell proliferation. Phosphorylation by MPK3 and MPK6 leads to the inhibition of stomatal fate and to degradation. Stabilized by CDKA-1-mediated phosphorylation at Ser-186 which promotes stomatal development. Expressed in developing leaf epidermis. Reduced accumulation in the stomatal lineage ground cells (SLGCs) where BASL is polarized in the cell cortex. Observed in small cells of non-protruding hypocotyl cell files and of developing cotyledon epidermis. Restricted to meristemoids (stomatal precursor cell) in leaves epidermis, mostly in dividing cells of non-protruding cell files.

It is found in the nucleus. Its activity is regulated as follows. Negatively regulated through phosphorylation by the MAPK module. Activity is constrained by polarized BASL in stomatal lineage ground cells (SLGCs) undergoing ACD. In terms of biological role, transcription factor acting as an integration node for stomata and brassinosteroid (BR) signaling pathways to control stomatal initiation and development. Activates transcription when in the presence of SCRM/ICE1. Functions as a dimer with SCRM or SCRM2 during stomatal initiation. Required for the initiation, the spacing and the formation of stomata, by promoting the first asymmetric cell divisions. Together with FMA and MUTE, modulates the stomata formation. Involved in the regulation of growth reduction under osmotic stress (e.g. mannitol), associated with a quick decrease of meristemoid mother cells (MMCs) number lower stomatal index and density. This Arabidopsis thaliana (Mouse-ear cress) protein is Transcription factor SPEECHLESS.